A 218-amino-acid chain; its full sequence is Small ribosomal subunit protein uS3c (218 aa).

Positions 47 to 118 (VRRHMKNYSN…KLNISIAKVA (72 aa)) constitute a KH type-2 domain.

It belongs to the universal ribosomal protein uS3 family. In terms of assembly, part of the 30S ribosomal subunit.

The protein resides in the plastid. The protein localises to the chloroplast. The protein is Small ribosomal subunit protein uS3c (rps3) of Ginkgo biloba (Ginkgo).